A 474-amino-acid polypeptide reads, in one-letter code: Gasdermin-C (474 aa).

Positions 1-237 are triggers pyroptosis; it reads MLYTFDQVSK…TCAILLSANA (237 aa).

It belongs to the gasdermin family. As to quaternary structure, homooligomer; homooligomeric ring-shaped pore complex containing 27-28 subunits when inserted in the membrane. Cleavage by CASP8 relieves autoinhibition by releasing the N-terminal moiety (Gasdermin-C, N-terminal) that initiates pyroptosis. Post-translationally, palmitoylated.

The protein localises to the cytoplasm. The protein resides in the cytosol. Its subcellular location is the cell membrane. The full-length protein before cleavage is inactive: intramolecular interactions between N- and C-terminal domains mediate autoinhibition in the absence of activation signal. The intrinsic pyroptosis-inducing activity is carried by the released N-terminal moiety (Gasdermin-C, N-terminal) following cleavage by caspase CASP8. In terms of biological role, this form constitutes the precursor of the pore-forming protein: upon cleavage, the released N-terminal moiety (Gasdermin-C, N-terminal) binds to membranes and forms pores, triggering pyroptosis. Functionally, pore-forming protein that causes membrane permeabilization and pyroptosis. Produced by the cleavage of gasdermin-C by caspase CASP8 in response to death signals. After cleavage, moves to the plasma membrane where it strongly binds to membrane inner leaflet lipids. Homooligomerizes within the membrane and forms pores of 10-15 nanometers (nm) of inner diameter, triggering pyroptosis. In Rattus norvegicus (Rat), this protein is Gasdermin-C.